The sequence spans 222 residues: Collectrin (222 aa).

Positions 1 to 14 (MLWALFFLVTTIHA) are cleaved as a signal peptide. Residues 15-141 (ELCRPDAENA…LAPPMDPSVP (127 aa)) are Extracellular-facing. In terms of domain architecture, Collectrin-like spans 21 to 222 (AENAFKVRLS…LTEDERLTPL (202 aa)). 2 N-linked (GlcNAc...) asparagine glycosylation sites follow: asparagine 76 and asparagine 93. The helical transmembrane segment at 142–162 (VWIIVFGVIFCIVTVAIALLV) threads the bilayer. Over 163–222 (LSGIRQRRRNKKGPPGVEDAEDKCENIITIENGIPCDPLDMKGGHINDGFLTEDERLTPL) the chain is Cytoplasmic. Threonine 214 and threonine 220 each carry phosphothreonine.

The protein belongs to the CLTRN family. Monomer. Homodimer; dimerization prevents CLTRN cleavage by BACE2. Interacts with SLC6A18; this interaction regulates the trafficking of SLC6A18 to the cell membrane and its amino acid transporter activity. Interacts with SLC6A19; this interaction regulates the trafficking of SLC6A19 to the cell membrane and its amino acid transporter activity. Interacts with SNAPIN. Glycosylated. Glycosylation is required for plasma membrane localization and for its cleavage by BACE2. Post-translationally, proteolytically processed in pancreatic beta cells by BACE2 leading to the generation and extracellular release of soluble CLTRN, and a corresponding cell-associated C-terminal fragment which is later cleaved by gamma-secretase. This shedding process inactivates CLTRN. Three cleavage sites have been identified for BACE2, two clustered sites after Phe-116 and Leu-118 and a more membrane proximal site at Phe-125; the preferred BACE2 cleavage site seems to be between Phe-125 and Leu-126, Phe-116 and Leu-118 act as alternative sites. In terms of tissue distribution, kidney; collecting ducts. Pancreas; beta cells of islets.

Its subcellular location is the cell membrane. Plays an important role in amino acid transport by acting as binding partner of amino acid transporters SLC6A18 and SLC6A19, regulating their trafficking on the cell surface and their activity. May also play a role in trafficking of amino acid transporters SLC3A1 and SLC7A9 to the renal cortical cell membrane. Regulator of SNARE complex function. Stimulator of beta cell replication. This is Collectrin from Rattus norvegicus (Rat).